A 354-amino-acid polypeptide reads, in one-letter code: Holliday junction branch migration complex subunit RuvB (354 aa).

The interval 4 to 190 is large ATPase domain (RuvB-L); sequence TDKLAAERII…FGIVARLEFY (187 aa). Residues Leu-29, Arg-30, Gly-71, Lys-74, Thr-75, Thr-76, 137-139, Arg-180, Tyr-190, and Arg-227 contribute to the ATP site; that span reads EDY. Residue Thr-75 coordinates Mg(2+). Positions 191 to 261 are small ATPAse domain (RuvB-S); that stretch reads NAEELARIVT…VADAALKMLD (71 aa). A head domain (RuvB-H) region spans residues 264-354; sequence AVGFDLMDRK…LPGLWDSAAT (91 aa). 3 residues coordinate DNA: Arg-300, Arg-319, and Arg-324.

The protein belongs to the RuvB family. Homohexamer. Forms an RuvA(8)-RuvB(12)-Holliday junction (HJ) complex. HJ DNA is sandwiched between 2 RuvA tetramers; dsDNA enters through RuvA and exits via RuvB. An RuvB hexamer assembles on each DNA strand where it exits the tetramer. Each RuvB hexamer is contacted by two RuvA subunits (via domain III) on 2 adjacent RuvB subunits; this complex drives branch migration. In the full resolvosome a probable DNA-RuvA(4)-RuvB(12)-RuvC(2) complex forms which resolves the HJ.

Its subcellular location is the cytoplasm. The enzyme catalyses ATP + H2O = ADP + phosphate + H(+). In terms of biological role, the RuvA-RuvB-RuvC complex processes Holliday junction (HJ) DNA during genetic recombination and DNA repair, while the RuvA-RuvB complex plays an important role in the rescue of blocked DNA replication forks via replication fork reversal (RFR). RuvA specifically binds to HJ cruciform DNA, conferring on it an open structure. The RuvB hexamer acts as an ATP-dependent pump, pulling dsDNA into and through the RuvAB complex. RuvB forms 2 homohexamers on either side of HJ DNA bound by 1 or 2 RuvA tetramers; 4 subunits per hexamer contact DNA at a time. Coordinated motions by a converter formed by DNA-disengaged RuvB subunits stimulates ATP hydrolysis and nucleotide exchange. Immobilization of the converter enables RuvB to convert the ATP-contained energy into a lever motion, pulling 2 nucleotides of DNA out of the RuvA tetramer per ATP hydrolyzed, thus driving DNA branch migration. The RuvB motors rotate together with the DNA substrate, which together with the progressing nucleotide cycle form the mechanistic basis for DNA recombination by continuous HJ branch migration. Branch migration allows RuvC to scan DNA until it finds its consensus sequence, where it cleaves and resolves cruciform DNA. The sequence is that of Holliday junction branch migration complex subunit RuvB from Paraburkholderia phytofirmans (strain DSM 17436 / LMG 22146 / PsJN) (Burkholderia phytofirmans).